We begin with the raw amino-acid sequence, 146 residues long: Large ribosomal subunit protein uL15 (146 aa).

A compositionally biased stretch (polar residues) spans 1 to 10; the sequence is MRLNQLSPSA. The interval 1 to 54 is disordered; sequence MRLNQLSPSAGSRPDAKRAGRGAGSGLGKTAGRGHKGQHSRSGGFHKVGFEGGQ. A compositionally biased stretch (gly residues) spans 21–31; sequence RGAGSGLGKTA.

This sequence belongs to the universal ribosomal protein uL15 family. Part of the 50S ribosomal subunit.

In terms of biological role, binds to the 23S rRNA. This chain is Large ribosomal subunit protein uL15, found in Halorhodospira halophila (strain DSM 244 / SL1) (Ectothiorhodospira halophila (strain DSM 244 / SL1)).